Consider the following 102-residue polypeptide: Protein translation factor SUI1 homolog (102 aa).

It belongs to the SUI1 family.

The chain is Protein translation factor SUI1 homolog from Nitrosopumilus maritimus (strain SCM1).